A 933-amino-acid chain; its full sequence is Serine/threonine-protein kinase PknD (933 aa).

The region spanning 4 to 291 (YDIIRMIGKG…ELKDDIEQHL (288 aa)) is the Protein kinase domain. ATP-binding positions include 10–18 (IGKGGMGEV) and K33. The Proton acceptor role is filled by D138.

Belongs to the protein kinase superfamily. Ser/Thr protein kinase family. Post-translationally, autophosphorylated on serine and threonine residues.

The catalysed reaction is L-seryl-[protein] + ATP = O-phospho-L-seryl-[protein] + ADP + H(+). It carries out the reaction L-threonyl-[protein] + ATP = O-phospho-L-threonyl-[protein] + ADP + H(+). Its function is as follows. Together with the serine/threonine kinase Pkn1, may play a role in the specific interactions with host proteins during intracellular growth. This is Serine/threonine-protein kinase PknD from Chlamydia felis (strain Fe/C-56) (Chlamydophila felis).